Consider the following 209-residue polypeptide: Uracil phosphoribosyltransferase (209 aa).

5-phospho-alpha-D-ribose 1-diphosphate is bound by residues arginine 79, arginine 104, and 131–139 (DPMLATGGS). Uracil-binding positions include isoleucine 194 and 199–201 (GDA). Aspartate 200 is a 5-phospho-alpha-D-ribose 1-diphosphate binding site.

The protein belongs to the UPRTase family. Requires Mg(2+) as cofactor.

The catalysed reaction is UMP + diphosphate = 5-phospho-alpha-D-ribose 1-diphosphate + uracil. It functions in the pathway pyrimidine metabolism; UMP biosynthesis via salvage pathway; UMP from uracil: step 1/1. Its activity is regulated as follows. Allosterically activated by GTP. Catalyzes the conversion of uracil and 5-phospho-alpha-D-ribose 1-diphosphate (PRPP) to UMP and diphosphate. This Bacillus licheniformis (strain ATCC 14580 / DSM 13 / JCM 2505 / CCUG 7422 / NBRC 12200 / NCIMB 9375 / NCTC 10341 / NRRL NRS-1264 / Gibson 46) protein is Uracil phosphoribosyltransferase.